The following is a 90-amino-acid chain: Small ribosomal subunit protein uS15c (90 aa).

It belongs to the universal ribosomal protein uS15 family. As to quaternary structure, part of the 30S ribosomal subunit.

It localises to the plastid. Its subcellular location is the chloroplast. This is Small ribosomal subunit protein uS15c (rps15-A) from Zea mays (Maize).